Here is a 252-residue protein sequence, read N- to C-terminus: Large ribosomal subunit protein uL3 (252 aa).

Q169 bears the N5-methylglutamine mark.

This sequence belongs to the universal ribosomal protein uL3 family. As to quaternary structure, part of the 50S ribosomal subunit. Forms a cluster with proteins L14 and L19. Post-translationally, methylated by PrmB.

Functionally, one of the primary rRNA binding proteins, it binds directly near the 3'-end of the 23S rRNA, where it nucleates assembly of the 50S subunit. The polypeptide is Large ribosomal subunit protein uL3 (Hyphomonas neptunium (strain ATCC 15444)).